The chain runs to 335 residues: Basic endochitinase B (335 aa).

A signal peptide spans 1-33 (MPPQKENHRTLNKMKTNLFLFLIFSLLLSLSSA). Residues 34–75 (EQCGRQAGGALCPNGLCCSEFGWCGNTEPYCKQPGCQSQCTP) form the Chitin-binding type-1 domain. 7 cysteine pairs are disulfide-bonded: Cys-36–Cys-51, Cys-45–Cys-57, Cys-50–Cys-64, Cys-69–Cys-73, Cys-107–Cys-169, Cys-181–Cys-189, and Cys-288–Cys-320. The Proton donor role is filled by Glu-151. Positions 329–335 (GLLEAAI) are cleaved as a propeptide — removed in mature form. Residues 329 to 335 (GLLEAAI) carry the Vacuolar targeting signal motif.

Belongs to the glycosyl hydrolase 19 family. Chitinase class I subfamily. As to expression, high constitutive level in roots with lower levels in leaves and flowering shoots.

The protein resides in the vacuole. The catalysed reaction is Random endo-hydrolysis of N-acetyl-beta-D-glucosaminide (1-&gt;4)-beta-linkages in chitin and chitodextrins.. Functionally, defense against chitin-containing fungal pathogens. Seems particularly implicated in resistance to jasmonate-inducing pathogens such as A.brassicicola. In vitro antifungal activity against T.reesei, but not against A.solani, F.oxysporum, S.sclerotiorum, G.graminis and P.megasperma. The chain is Basic endochitinase B (CHI-B) from Arabidopsis thaliana (Mouse-ear cress).